Reading from the N-terminus, the 133-residue chain is Brain natriuretic peptide (133 aa).

The first 22 residues, 1–22 (MVVSFVSICGLLLIFNLPLSTS), serve as a signal peptide directing secretion. The segment covering 44 to 53 (SMSEETEEDQ) has biased composition (acidic residues). Disordered regions lie at residues 44–76 (SMSEETEEDQMVPANSESLEPVGSMKQTANRDQ) and 93–112 (TRKNVQNDSSRRSSSCFGRR). A disulfide bridge connects residues Cys-108 and Cys-124.

It belongs to the natriuretic peptide family.

It localises to the secreted. Its function is as follows. Cardiac hormone which may function as a paracrine antifibrotic factor in the heart. Also plays a key role in cardiovascular homeostasis through natriuresis, diuresis, vasorelaxation, and inhibition of renin and aldosterone secretion. Has a cGMP-stimulating activity. The protein is Brain natriuretic peptide (nppb) of Takifugu rubripes (Japanese pufferfish).